The following is a 303-amino-acid chain: Serine/threonine-protein phosphatase 6 catalytic subunit (303 aa).

Positions 51, 53, 79, and 111 each coordinate Mn(2+). H112 functions as the Proton donor in the catalytic mechanism. Residues H161 and H235 each coordinate Mn(2+).

This sequence belongs to the PPP phosphatase family. PP-6 (PP-V) subfamily. Mn(2+) serves as cofactor.

The protein resides in the cytoplasm. The catalysed reaction is O-phospho-L-seryl-[protein] + H2O = L-seryl-[protein] + phosphate. It catalyses the reaction O-phospho-L-threonyl-[protein] + H2O = L-threonyl-[protein] + phosphate. In terms of biological role, may be involved in controlling cellularization or in regulating transcription of the genes involved in this process. The chain is Serine/threonine-protein phosphatase 6 catalytic subunit (PpV) from Drosophila melanogaster (Fruit fly).